The primary structure comprises 199 residues: MKDKEIKEEVLKEEINKEVNEKKKCECEEGKEEAHEHKNDEHACCGKHNHKEEIEKLKAEIEEWKNSFLRKQADFQNFTKRKEKEVDELKKFASEKIITQFLGSLDNFERAIESSSESKDFDSLLQGVEMIVRNLKDIMSSEDVEEIPTEGAFNPEYHHAVGVETSEDKKEDEIVKVLQKGYMMKGKVIRPAMVIVCKK.

It belongs to the GrpE family. As to quaternary structure, homodimer.

It localises to the cytoplasm. In terms of biological role, participates actively in the response to hyperosmotic and heat shock by preventing the aggregation of stress-denatured proteins, in association with DnaK and GrpE. It is the nucleotide exchange factor for DnaK and may function as a thermosensor. Unfolded proteins bind initially to DnaJ; upon interaction with the DnaJ-bound protein, DnaK hydrolyzes its bound ATP, resulting in the formation of a stable complex. GrpE releases ADP from DnaK; ATP binding to DnaK triggers the release of the substrate protein, thus completing the reaction cycle. Several rounds of ATP-dependent interactions between DnaJ, DnaK and GrpE are required for fully efficient folding. The chain is Protein GrpE from Fusobacterium nucleatum subsp. nucleatum (strain ATCC 25586 / DSM 15643 / BCRC 10681 / CIP 101130 / JCM 8532 / KCTC 2640 / LMG 13131 / VPI 4355).